Reading from the N-terminus, the 429-residue chain is Serine--tRNA ligase (429 aa).

L-serine is bound at residue 235–237 (TAE). 266–268 (RSE) provides a ligand contact to ATP. L-serine is bound at residue glutamate 289. 353–356 (EISS) contributes to the ATP binding site. Serine 389 lines the L-serine pocket.

It belongs to the class-II aminoacyl-tRNA synthetase family. Type-1 seryl-tRNA synthetase subfamily. As to quaternary structure, homodimer. The tRNA molecule binds across the dimer.

Its subcellular location is the cytoplasm. The catalysed reaction is tRNA(Ser) + L-serine + ATP = L-seryl-tRNA(Ser) + AMP + diphosphate + H(+). It carries out the reaction tRNA(Sec) + L-serine + ATP = L-seryl-tRNA(Sec) + AMP + diphosphate + H(+). The protein operates within aminoacyl-tRNA biosynthesis; selenocysteinyl-tRNA(Sec) biosynthesis; L-seryl-tRNA(Sec) from L-serine and tRNA(Sec): step 1/1. In terms of biological role, catalyzes the attachment of serine to tRNA(Ser). Is also able to aminoacylate tRNA(Sec) with serine, to form the misacylated tRNA L-seryl-tRNA(Sec), which will be further converted into selenocysteinyl-tRNA(Sec). The chain is Serine--tRNA ligase from Histophilus somni (strain 2336) (Haemophilus somnus).